The following is a 220-amino-acid chain: MPPRPRFDRRAPVRELPNINERINYPQLRVVDADGTQLGVIDREKALEVAQERELDLVLVSEKADPPVCRIMDYGKYKFEQEKKAKEAKKKSHQTEVKEVKMRYKIDQHDYDVRIGQAQRFLKAGDKVKCTVIFRGREIQHTALAETLLRRMAKDLEEPAEIQQPPKREGRNMIMFLTPRKTPLVKKDDKEEPATRAVRTITAPPRPTSARLASKPAGNG.

Residues 182 to 220 (TPLVKKDDKEEPATRAVRTITAPPRPTSARLASKPAGNG) form a disordered region. A compositionally biased stretch (basic and acidic residues) spans 185 to 194 (VKKDDKEEPA).

This sequence belongs to the IF-3 family. In terms of assembly, monomer.

It localises to the cytoplasm. Functionally, IF-3 binds to the 30S ribosomal subunit and shifts the equilibrium between 70S ribosomes and their 50S and 30S subunits in favor of the free subunits, thus enhancing the availability of 30S subunits on which protein synthesis initiation begins. The protein is Translation initiation factor IF-3 of Synechococcus sp. (strain WH7803).